Here is an 842-residue protein sequence, read N- to C-terminus: Elongation factor 2 (842 aa).

The tr-type G domain maps to 17–253 (TNVRNMSVIA…LWGDSYFNPK (237 aa)). Residues 26–33 (AHVDHGKS), 158–161 (NKVD), and 213–215 (SGL) each bind GTP. His-699 carries the diphthamide modification.

This sequence belongs to the TRAFAC class translation factor GTPase superfamily. Classic translation factor GTPase family. EF-G/EF-2 subfamily.

The protein resides in the cytoplasm. It catalyses the reaction GTP + H2O = GDP + phosphate + H(+). Catalyzes the GTP-dependent ribosomal translocation step during translation elongation. During this step, the ribosome changes from the pre-translocational (PRE) to the post-translocational (POST) state as the newly formed A-site-bound peptidyl-tRNA and P-site-bound deacylated tRNA move to the P and E sites, respectively. Catalyzes the coordinated movement of the two tRNA molecules, the mRNA and conformational changes in the ribosome. In Naumovozyma castellii (Yeast), this protein is Elongation factor 2 (EFT1).